Consider the following 226-residue polypeptide: NADH-ubiquinone oxidoreductase chain 6 (226 aa).

Transmembrane regions (helical) follow at residues 2 to 22, 28 to 48, 56 to 76, 90 to 110, and 169 to 189; these read STLGLLIMLLGIIIMCTLVIL, IYSILNLIVIYGCYASILLTV, IYILVNVGAIAVLFLFIVMMI, YNIYMIVGIIGVVGLLGILIT, and IWFIMACIILLIGMVGVIYIT.

Belongs to the complex I subunit 6 family.

The protein resides in the mitochondrion membrane. It catalyses the reaction a ubiquinone + NADH + 5 H(+)(in) = a ubiquinol + NAD(+) + 4 H(+)(out). Functionally, core subunit of the mitochondrial membrane respiratory chain NADH dehydrogenase (Complex I) that is believed to belong to the minimal assembly required for catalysis. Complex I functions in the transfer of electrons from NADH to the respiratory chain. The immediate electron acceptor for the enzyme is believed to be ubiquinone. In Dictyostelium discoideum (Social amoeba), this protein is NADH-ubiquinone oxidoreductase chain 6 (nad6).